The chain runs to 179 residues: Large ribosomal subunit protein uL5 (179 aa).

It belongs to the universal ribosomal protein uL5 family. In terms of assembly, part of the 50S ribosomal subunit; part of the 5S rRNA/L5/L18/L25 subcomplex. Contacts the 5S rRNA and the P site tRNA. Forms a bridge to the 30S subunit in the 70S ribosome.

This is one of the proteins that bind and probably mediate the attachment of the 5S RNA into the large ribosomal subunit, where it forms part of the central protuberance. In the 70S ribosome it contacts protein S13 of the 30S subunit (bridge B1b), connecting the 2 subunits; this bridge is implicated in subunit movement. Contacts the P site tRNA; the 5S rRNA and some of its associated proteins might help stabilize positioning of ribosome-bound tRNAs. The polypeptide is Large ribosomal subunit protein uL5 (Geobacillus sp. (strain WCH70)).